Consider the following 156-residue polypeptide: 6,7-dimethyl-8-ribityllumazine synthase (156 aa).

5-amino-6-(D-ribitylamino)uracil contacts are provided by residues Phe23, 57 to 59 (SWE), and 81 to 83 (AVV). 86–87 (ET) serves as a coordination point for (2S)-2-hydroxy-3-oxobutyl phosphate. His89 (proton donor) is an active-site residue. Phe114 provides a ligand contact to 5-amino-6-(D-ribitylamino)uracil. (2S)-2-hydroxy-3-oxobutyl phosphate is bound at residue Arg128.

Belongs to the DMRL synthase family.

It catalyses the reaction (2S)-2-hydroxy-3-oxobutyl phosphate + 5-amino-6-(D-ribitylamino)uracil = 6,7-dimethyl-8-(1-D-ribityl)lumazine + phosphate + 2 H2O + H(+). Its pathway is cofactor biosynthesis; riboflavin biosynthesis; riboflavin from 2-hydroxy-3-oxobutyl phosphate and 5-amino-6-(D-ribitylamino)uracil: step 1/2. Catalyzes the formation of 6,7-dimethyl-8-ribityllumazine by condensation of 5-amino-6-(D-ribitylamino)uracil with 3,4-dihydroxy-2-butanone 4-phosphate. This is the penultimate step in the biosynthesis of riboflavin. This is 6,7-dimethyl-8-ribityllumazine synthase from Salinibacter ruber (strain DSM 13855 / M31).